The chain runs to 153 residues: Protein DpnD (153 aa).

The polypeptide is Protein DpnD (Streptococcus pneumoniae serotype 4 (strain ATCC BAA-334 / TIGR4)).